The sequence spans 417 residues: Neuropeptide FF receptor 2 (417 aa).

Residues 1 to 45 (MGKRWDSNSSGSWDHIWSGNDTQHPWYSDINITYMNYYLHQPHVT) are Extracellular-facing. Residues Asn-8, Asn-20, and Asn-31 are each glycosylated (N-linked (GlcNAc...) asparagine). Residues 46-66 (AVFISSYFLIFFLCMVGNTVV) form a helical membrane-spanning segment. The Cytoplasmic portion of the chain corresponds to 67–82 (CFVVIRNRYMHTVTNF). Residues 83-103 (FIFNLAISDLLVGIFCMPITL) traverse the membrane as a helical segment. The Extracellular portion of the chain corresponds to 104–119 (LDNIIAGWPFGSSMCK). Cys-118 and Cys-206 are oxidised to a cystine. A helical membrane pass occupies residues 120–140 (ISGLVQGISVAASVFTLVAIA). At 141–160 (VDRFRCVVYPFKPKLTVKTA) the chain is on the cytoplasmic side. The chain crosses the membrane as a helical span at residues 161-181 (FVMIVIIWGLAITIMTPSAIM). Residues 182–217 (LHVQEEKYYRVRLSSHNKTSTVYWCREDWPNQEMRR) lie on the Extracellular side of the membrane. The N-linked (GlcNAc...) asparagine glycan is linked to Asn-198. Residues 218–238 (IYTTVLFATIYLAPLSLIVIM) form a helical membrane-spanning segment. The Cytoplasmic portion of the chain corresponds to 239-274 (YARIGASLFKTSAHSTGKQRLEQWHVSKKKQKVIKM). A helical membrane pass occupies residues 275-295 (LLTVALLFILSWLPLWTLMML). Over 296–310 (SDYADLSPNKLRVIN) the chain is Extracellular. The chain crosses the membrane as a helical span at residues 311–331 (IYVYPFAHWLAFCNSSVNPII). The Cytoplasmic segment spans residues 332-417 (YGFFNENFRS…TGEATNSTET (86 aa)). The tract at residues 378-417 (HEPASQNPSGENLGCRKSADNPTQESLMEETGEATNSTET) is disordered.

This sequence belongs to the G-protein coupled receptor 1 family.

It localises to the cell membrane. Functionally, receptor for NPAF (A-18-F-amide) and NPFF (F-8-F-amide) neuropeptides, also known as morphine-modulating peptides. Can also be activated by a variety of naturally occurring or synthetic FMRF-amide like ligands. This receptor mediates its action by association with G proteins that activate a phosphatidylinositol-calcium second messenger system. The chain is Neuropeptide FF receptor 2 (Npffr2) from Rattus norvegicus (Rat).